A 68-amino-acid polypeptide reads, in one-letter code: Tabimmunregulin 12 (68 aa).

A signal peptide spans 1–24; it reads MLFKSYVYFLAGLLLVGLFTSCDA. Positions 25-38 are excised as a propeptide; sequence DAQYEELVPGFFRK.

As to expression, expressed in salivary glands.

The protein resides in the secreted. Horsefly salivary gland immunosuppressant protein that likely inhibits the host inflammatory response by regulation of anti- and pro-inflammatory cytokines. When tested on mouse splenocytes in the presence of LPS, it increases the secretion of the proinflammatory cytokine interleukin-10 (IL10) and decreases the secretion of the proinflammatory cytokine interferon-gamma (IFNG) in a dose-dependent manner. In Tabanus yao (Horsefly), this protein is Tabimmunregulin 12.